The following is a 329-amino-acid chain: GTPase Obg (329 aa).

In terms of domain architecture, Obg spans 1–159 (MQFIDQARIT…WPLQLELKLL (159 aa)). An OBG-type G domain is found at 160-328 (AEVGIIGLPN…LLAETWVELG (169 aa)). ATP is bound by residues 166–173 (GLPNAGKS), 191–195 (FTTLV), 213–216 (DIPG), 280–283 (NKQE), and 309–311 (SAA). Mg(2+)-binding residues include Ser173 and Thr193.

Belongs to the TRAFAC class OBG-HflX-like GTPase superfamily. OBG GTPase family. As to quaternary structure, monomer. Mg(2+) is required as a cofactor.

The protein localises to the cytoplasm. In terms of biological role, an essential GTPase which binds GTP, GDP and possibly (p)ppGpp with moderate affinity, with high nucleotide exchange rates and a fairly low GTP hydrolysis rate. Plays a role in control of the cell cycle, stress response, ribosome biogenesis and in those bacteria that undergo differentiation, in morphogenesis control. The protein is GTPase Obg of Synechococcus sp. (strain CC9605).